A 195-amino-acid polypeptide reads, in one-letter code: HTH-type transcriptional regulator BetI (195 aa).

The HTH tetR-type domain maps to serine 8–leucine 68. The segment at residues threonine 31 to phenylalanine 50 is a DNA-binding region (H-T-H motif).

Its pathway is amine and polyamine biosynthesis; betaine biosynthesis via choline pathway [regulation]. In terms of biological role, repressor involved in the biosynthesis of the osmoprotectant glycine betaine. It represses transcription of the choline transporter BetT and the genes of BetAB involved in the synthesis of glycine betaine. The protein is HTH-type transcriptional regulator BetI of Escherichia coli O157:H7.